Here is an 84-residue protein sequence, read N- to C-terminus: Double gene block protein 2 (84 aa).

Residues 1–4 (MPSA) lie on the Lumenal side of the membrane. The helical transmembrane segment at 5–25 (NLHPIVLTGVIGLMLLIRLRC) threads the bilayer. Residues 26–30 (TFTST) are Cytoplasmic-facing. Residues 31–51 (FSLPPLVTLNQIIALSFCGLL) traverse the membrane as a helical segment. At 52–84 (LNSISRAERACYYNYSVDSSKQQHISISTPNGK) the chain is on the lumenal side.

Belongs to the carmovirus double gene block protein 2 family.

It is found in the host endoplasmic reticulum membrane. Its function is as follows. Cell-to-cell movement function. This is Double gene block protein 2 from Carnation mottle virus (isolate China/Shanghai) (CarMV).